The sequence spans 248 residues: 3-deoxy-manno-octulosonate cytidylyltransferase (248 aa).

Belongs to the KdsB family.

The protein resides in the cytoplasm. The enzyme catalyses 3-deoxy-alpha-D-manno-oct-2-ulosonate + CTP = CMP-3-deoxy-beta-D-manno-octulosonate + diphosphate. Its pathway is nucleotide-sugar biosynthesis; CMP-3-deoxy-D-manno-octulosonate biosynthesis; CMP-3-deoxy-D-manno-octulosonate from 3-deoxy-D-manno-octulosonate and CTP: step 1/1. It participates in bacterial outer membrane biogenesis; lipopolysaccharide biosynthesis. In terms of biological role, activates KDO (a required 8-carbon sugar) for incorporation into bacterial lipopolysaccharide in Gram-negative bacteria. This chain is 3-deoxy-manno-octulosonate cytidylyltransferase, found in Syntrophus aciditrophicus (strain SB).